The following is a 185-amino-acid chain: Protein E3 homolog (185 aa).

The region spanning Thr-7–Tyr-73 is the Z-binding domain. Residues Asn-112–Asp-179 form the DRBM domain.

This sequence belongs to the poxviridae E3 protein family.

In terms of biological role, RNA-binding protein that plays a role in the inhibition of multiple cellular antiviral responses activated by double-stranded RNA (dsRNA), such as inhibition of PKR activation, necroptosis, and IFN-mediated antiviral activities. Recognizes and binds Z-RNA structures via its Z-binding domain and dsRNA via its DRBM domain: RNA-binding activity is required to escape host ZBP1-dependent necroptosis. Mechanistically, the Z-binding domain binds Z-RNAs that are produced during Yaba-like disease virus infection, thereby competing with Z-RNA detection by host ZBP1, suppressing ZBP1-dependent necroptosis. In Yaba-like disease virus (YLDV), this protein is Protein E3 homolog.